Here is a 754-residue protein sequence, read N- to C-terminus: 5-methyltetrahydropteroyltriglutamate--homocysteine methyltransferase (754 aa).

5-methyltetrahydropteroyltri-L-glutamate is bound by residues 15–18 (RELK) and lysine 114. Residues 430 to 432 (IGS) and glutamate 483 each bind L-homocysteine. L-methionine contacts are provided by residues 430 to 432 (IGS) and glutamate 483. Residues 514–515 (RC) and tryptophan 560 each bind 5-methyltetrahydropteroyltri-L-glutamate. Position 598 (aspartate 598) interacts with L-homocysteine. Aspartate 598 provides a ligand contact to L-methionine. A 5-methyltetrahydropteroyltri-L-glutamate-binding site is contributed by glutamate 604. The Zn(2+) site is built by histidine 641, cysteine 643, and glutamate 665. Histidine 694 (proton donor) is an active-site residue. Residue cysteine 726 participates in Zn(2+) binding.

This sequence belongs to the vitamin-B12 independent methionine synthase family. It depends on Zn(2+) as a cofactor.

The catalysed reaction is 5-methyltetrahydropteroyltri-L-glutamate + L-homocysteine = tetrahydropteroyltri-L-glutamate + L-methionine. The protein operates within amino-acid biosynthesis; L-methionine biosynthesis via de novo pathway; L-methionine from L-homocysteine (MetE route): step 1/1. In terms of biological role, catalyzes the transfer of a methyl group from 5-methyltetrahydrofolate to homocysteine resulting in methionine formation. The polypeptide is 5-methyltetrahydropteroyltriglutamate--homocysteine methyltransferase (Campylobacter jejuni (strain RM1221)).